Here is a 430-residue protein sequence, read N- to C-terminus: Trigger factor (430 aa).

One can recognise a PPIase FKBP-type domain in the interval 163–248 (GNIAIIDFKG…IKDIKVKELP (86 aa)).

This sequence belongs to the FKBP-type PPIase family. Tig subfamily.

It localises to the cytoplasm. The enzyme catalyses [protein]-peptidylproline (omega=180) = [protein]-peptidylproline (omega=0). In terms of biological role, involved in protein export. Acts as a chaperone by maintaining the newly synthesized protein in an open conformation. Functions as a peptidyl-prolyl cis-trans isomerase. This Clostridium botulinum (strain Kyoto / Type A2) protein is Trigger factor.